The following is a 125-amino-acid chain: Protein ApaG (125 aa).

An ApaG domain is found at 1–125 (MNDTPRVCVQ…FRLAIATHIH (125 aa)).

This is Protein ApaG from Erwinia tasmaniensis (strain DSM 17950 / CFBP 7177 / CIP 109463 / NCPPB 4357 / Et1/99).